Here is a 369-residue protein sequence, read N- to C-terminus: tRNA 2-selenouridine synthase (369 aa).

One can recognise a Rhodanese domain in the interval 15-138; it reads FLNQHPMMDV…MRQYLIGVIE (124 aa). The active-site S-selanylcysteine intermediate is the Cys98.

The protein belongs to the SelU family. In terms of assembly, monomer.

It carries out the reaction 5-methylaminomethyl-2-thiouridine(34) in tRNA + selenophosphate + (2E)-geranyl diphosphate + H2O + H(+) = 5-methylaminomethyl-2-selenouridine(34) in tRNA + (2E)-thiogeraniol + phosphate + diphosphate. The catalysed reaction is 5-methylaminomethyl-2-thiouridine(34) in tRNA + (2E)-geranyl diphosphate = 5-methylaminomethyl-S-(2E)-geranyl-thiouridine(34) in tRNA + diphosphate. The enzyme catalyses 5-methylaminomethyl-S-(2E)-geranyl-thiouridine(34) in tRNA + selenophosphate + H(+) = 5-methylaminomethyl-2-(Se-phospho)selenouridine(34) in tRNA + (2E)-thiogeraniol. It catalyses the reaction 5-methylaminomethyl-2-(Se-phospho)selenouridine(34) in tRNA + H2O = 5-methylaminomethyl-2-selenouridine(34) in tRNA + phosphate. In terms of biological role, involved in the post-transcriptional modification of the uridine at the wobble position (U34) of tRNA(Lys), tRNA(Glu) and tRNA(Gln). Catalyzes the conversion of 2-thiouridine (S2U-RNA) to 2-selenouridine (Se2U-RNA). Acts in a two-step process involving geranylation of 2-thiouridine (S2U) to S-geranyl-2-thiouridine (geS2U) and subsequent selenation of the latter derivative to 2-selenouridine (Se2U) in the tRNA chain. The protein is tRNA 2-selenouridine synthase of Shewanella sp. (strain W3-18-1).